We begin with the raw amino-acid sequence, 377 residues long: Succinyl-diaminopimelate desuccinylase (377 aa).

A Zn(2+)-binding site is contributed by His68. Asp70 is a catalytic residue. Asp101 serves as a coordination point for Zn(2+). Residue Glu135 is the Proton acceptor of the active site. Glu136, Glu164, and His350 together coordinate Zn(2+).

It belongs to the peptidase M20A family. DapE subfamily. Homodimer. The cofactor is Zn(2+). Co(2+) is required as a cofactor.

The enzyme catalyses N-succinyl-(2S,6S)-2,6-diaminopimelate + H2O = (2S,6S)-2,6-diaminopimelate + succinate. The protein operates within amino-acid biosynthesis; L-lysine biosynthesis via DAP pathway; LL-2,6-diaminopimelate from (S)-tetrahydrodipicolinate (succinylase route): step 3/3. In terms of biological role, catalyzes the hydrolysis of N-succinyl-L,L-diaminopimelic acid (SDAP), forming succinate and LL-2,6-diaminopimelate (DAP), an intermediate involved in the bacterial biosynthesis of lysine and meso-diaminopimelic acid, an essential component of bacterial cell walls. This chain is Succinyl-diaminopimelate desuccinylase, found in Aliivibrio fischeri (strain ATCC 700601 / ES114) (Vibrio fischeri).